We begin with the raw amino-acid sequence, 23 residues long: Dermaseptin-4 (23 aa).

Glutamine amide is present on Q23.

In terms of tissue distribution, expressed by the skin glands.

The protein localises to the secreted. Antimicrobial peptide, active against the Gram-positive bacterium S.aureus, and the Gram-negative bacteria E.coli and P.aeruginosa. Has hemolytic activity (5% hemolysis at 128 ug/ml). The chain is Dermaseptin-4 from Phyllomedusa tarsius (Brownbelly leaf frog).